A 738-amino-acid chain; its full sequence is Ethylene receptor (738 aa).

3 helical membrane-spanning segments follow: residues 23 to 43, 54 to 74, and 89 to 109; these read ISDF…IYFV, VLVQ…INLW, and IAKV…VHII. Cu cation-binding residues include cysteine 65 and histidine 69. Residues 158–307 enclose the GAF domain; sequence DRHTILRTTL…VVADQVAVAL (150 aa). The region spanning 350–589 is the Histidine kinase domain; the sequence is VMNHEMRTPM…IFIVKLGIPE (240 aa). Histidine 353 is subject to Phosphohistidine; by autocatalysis. In terms of domain architecture, Response regulatory spans 615-730; the sequence is KVLLMDDNGV…KMRSVLSDLL (116 aa). At aspartate 663 the chain carries 4-aspartylphosphate.

The protein belongs to the ethylene receptor family. Homodimer; disulfide-linked. Cu cation is required as a cofactor. In terms of processing, activation probably requires a transfer of a phosphate group between a His in the transmitter domain and an Asp of the receiver domain. In terms of tissue distribution, higher expression in arils than in seeds.

The protein resides in the endoplasmic reticulum membrane. It carries out the reaction ATP + protein L-histidine = ADP + protein N-phospho-L-histidine.. Functionally, may act early in the ethylene signal transduction pathway, possibly as an ethylene receptor, or as a regulator of the pathway. The polypeptide is Ethylene receptor (ETR1) (Passiflora edulis (Passion fruit)).